The chain runs to 304 residues: UDP-N-acetylenolpyruvoylglucosamine reductase (304 aa).

The FAD-binding PCMH-type domain maps to Arg31–Gly196. The active site involves Arg176. The active-site Proton donor is the Ser225. Glu295 is an active-site residue.

It belongs to the MurB family. FAD is required as a cofactor.

It is found in the cytoplasm. The catalysed reaction is UDP-N-acetyl-alpha-D-muramate + NADP(+) = UDP-N-acetyl-3-O-(1-carboxyvinyl)-alpha-D-glucosamine + NADPH + H(+). The protein operates within cell wall biogenesis; peptidoglycan biosynthesis. Cell wall formation. This Methylococcus capsulatus (strain ATCC 33009 / NCIMB 11132 / Bath) protein is UDP-N-acetylenolpyruvoylglucosamine reductase.